Here is a 357-residue protein sequence, read N- to C-terminus: UDP-N-acetylglucosamine--N-acetylmuramyl-(pentapeptide) pyrophosphoryl-undecaprenol N-acetylglucosamine transferase (357 aa).

Residues Thr-12 to Gly-14, Asn-124, Arg-162, Ser-190, Ile-243, Ala-262 to Glu-267, and Gln-288 contribute to the UDP-N-acetyl-alpha-D-glucosamine site.

The protein belongs to the glycosyltransferase 28 family. MurG subfamily.

Its subcellular location is the cell inner membrane. The enzyme catalyses di-trans,octa-cis-undecaprenyl diphospho-N-acetyl-alpha-D-muramoyl-L-alanyl-D-glutamyl-meso-2,6-diaminopimeloyl-D-alanyl-D-alanine + UDP-N-acetyl-alpha-D-glucosamine = di-trans,octa-cis-undecaprenyl diphospho-[N-acetyl-alpha-D-glucosaminyl-(1-&gt;4)]-N-acetyl-alpha-D-muramoyl-L-alanyl-D-glutamyl-meso-2,6-diaminopimeloyl-D-alanyl-D-alanine + UDP + H(+). The protein operates within cell wall biogenesis; peptidoglycan biosynthesis. In terms of biological role, cell wall formation. Catalyzes the transfer of a GlcNAc subunit on undecaprenyl-pyrophosphoryl-MurNAc-pentapeptide (lipid intermediate I) to form undecaprenyl-pyrophosphoryl-MurNAc-(pentapeptide)GlcNAc (lipid intermediate II). In Alcanivorax borkumensis (strain ATCC 700651 / DSM 11573 / NCIMB 13689 / SK2), this protein is UDP-N-acetylglucosamine--N-acetylmuramyl-(pentapeptide) pyrophosphoryl-undecaprenol N-acetylglucosamine transferase.